We begin with the raw amino-acid sequence, 75 residues long: Large ribosomal subunit protein bL31 (75 aa).

The protein belongs to the bacterial ribosomal protein bL31 family. Type A subfamily. As to quaternary structure, part of the 50S ribosomal subunit.

Its function is as follows. Binds the 23S rRNA. The chain is Large ribosomal subunit protein bL31 from Gluconobacter oxydans (strain 621H) (Gluconobacter suboxydans).